The primary structure comprises 180 residues: ADP-ribosylation factor 4 (180 aa).

Gly2 is lipidated: N-myristoyl glycine. GTP-binding positions include Gly24–Thr31, Asp67–Gln71, and Asn126–Asp129.

It belongs to the small GTPase superfamily. Arf family.

The protein localises to the golgi apparatus. Its function is as follows. GTP-binding protein involved in protein trafficking; may modulate vesicle budding and uncoating within the Golgi apparatus. May be involved in ciliogenesis. This chain is ADP-ribosylation factor 4 (arf4), found in Xenopus laevis (African clawed frog).